A 190-amino-acid chain; its full sequence is Biphenyl-2,3-diol 1,2-dioxygenase 3 (190 aa).

Residues 6–125 (RLAHFVLQTN…DGNMVELQID (120 aa)) form the VOC domain. The Fe cation site is built by His-9, His-73, and Glu-121.

This sequence belongs to the extradiol ring-cleavage dioxygenase family. Homohexamer. Requires Fe(2+) as cofactor.

The enzyme catalyses biphenyl-2,3-diol + O2 = 2-hydroxy-6-oxo-6-phenylhexa-2,4-dienoate + H(+). It functions in the pathway xenobiotic degradation; biphenyl degradation; 2-hydroxy-2,4-pentadienoate and benzoate from biphenyl: step 3/4. The sequence is that of Biphenyl-2,3-diol 1,2-dioxygenase 3 (bphC3) from Rhodococcus globerulus.